The following is a 727-amino-acid chain: Kinesin-like protein KIN-14G (727 aa).

Disordered stretches follow at residues 100–156 (QTAP…LHLR), 172–194 (HLSA…SCSR), and 336–357 (LAGG…GATR). Residues 114–133 (VASSTAGRASRTKSASSTGR) are compositionally biased toward polar residues. The Kinesin motor domain maps to 381–710 (NIRVFCRVRP…LRFAARVNSC (330 aa)). Position 461-468 (461-468 (GQTGSGKT)) interacts with ATP.

This sequence belongs to the TRAFAC class myosin-kinesin ATPase superfamily. Kinesin family. KIN-14 subfamily.

The polypeptide is Kinesin-like protein KIN-14G (Oryza sativa subsp. japonica (Rice)).